Here is a 487-residue protein sequence, read N- to C-terminus: Glutamyl-tRNA(Gln) amidotransferase subunit A (487 aa).

Catalysis depends on charge relay system residues Lys-75 and Ser-150. Residue Ser-174 is the Acyl-ester intermediate of the active site.

This sequence belongs to the amidase family. GatA subfamily. Heterotrimer of A, B and C subunits.

The enzyme catalyses L-glutamyl-tRNA(Gln) + L-glutamine + ATP + H2O = L-glutaminyl-tRNA(Gln) + L-glutamate + ADP + phosphate + H(+). Allows the formation of correctly charged Gln-tRNA(Gln) through the transamidation of misacylated Glu-tRNA(Gln) in organisms which lack glutaminyl-tRNA synthetase. The reaction takes place in the presence of glutamine and ATP through an activated gamma-phospho-Glu-tRNA(Gln). This Deinococcus deserti (strain DSM 17065 / CIP 109153 / LMG 22923 / VCD115) protein is Glutamyl-tRNA(Gln) amidotransferase subunit A.